The primary structure comprises 534 residues: Acetyltransferase MATC1 (534 aa).

Active-site proton acceptor residues include His186 and Asp459.

It belongs to the plant acyltransferase family.

The protein localises to the cell membrane. Its pathway is secondary metabolite biosynthesis. In terms of biological role, acetyltransferase; part of the gene cluster that mediates the biosynthesis of mannosylerythritol lipids (MELs), surface-active substances that enhance the availability of water-insoluble substrates. Mannosylerythritol lipid production is responsible for hemolytic activity of Ustilago maydis. Depending on the number of acetyl groups, mannosylerythritol lipids can be differentiated into MEL A (fully acetylated), MEL B and MEL C (monoacetylated at R-6 and R-4, respectively), and the fully deacetylated MEL D. The first step in the pathway is the generation of mannosylerythritol by the glycosyltransferase EMT1 which catalyzes the transfer of GDP-mannose to the C-4 atom of meso-erythritol. This reaction has to be stereospecific, since only mannosyl-D-erythritol is generated. The produced disaccharide is subsequently acylated with fatty acids of various lengths derived from the peroxisomal beta-oxidation by the peroxisomal acyltransferases MAC1 and MAC2 at positions C-2 and C-3, repectively. The existence of MEL derivatives which carry an acetyl group at C-2 implies that at least MAC1 also accepts acetyl-CoA as a donor. The final step of MEL biosynthesis is the acetylation of the fully acylated mannosylerythritol lipids catalyzed by the acetyl-CoA-dependent acetyltransferase MAT1. MAT1 displays a relaxed regioselectivity and is able to transfer acetylgroups to both positions C-4 and C-6 of the mannosyl moiety. The sequence is that of Acetyltransferase MATC1 from Mycosarcoma maydis (Corn smut fungus).